Here is a 143-residue protein sequence, read N- to C-terminus: MFMGEYLHTIDGKGRLIVPARFREALGERFIATKGLDHCLFVYPLDEWKVLEEKLRALPFTQPEARAFVRFFFSGATECELDKQGRILLPANLREYAQLDKDAVLVGVSSRVEIWSQALWADYSRQAEDAYASAAESLVNLGI.

SpoVT-AbrB domains lie at 5–47 (EYLH…PLDE) and 76–119 (ATEC…SQAL).

This sequence belongs to the MraZ family. In terms of assembly, forms oligomers.

It is found in the cytoplasm. The protein localises to the nucleoid. This chain is Transcriptional regulator MraZ, found in Desulfitobacterium hafniense (strain Y51).